The sequence spans 298 residues: Inosose dehydratase 1 (298 aa).

This sequence belongs to the IolE/MocC family. Glutathione serves as cofactor. The cofactor is Co(2+). Requires Mn(2+) as cofactor.

The enzyme catalyses scyllo-inosose = 3D-3,5/4-trihydroxycyclohexane-1,2-dione + H2O. Its pathway is polyol metabolism; myo-inositol degradation into acetyl-CoA; acetyl-CoA from myo-inositol: step 2/7. Functionally, catalyzes the dehydration of inosose (2-keto-myo-inositol, 2KMI or 2,4,6/3,5-pentahydroxycyclohexanone) to 3D-(3,5/4)-trihydroxycyclohexane-1,2-dione (D-2,3-diketo-4-deoxy-epi-inositol). The protein is Inosose dehydratase 1 of Bacillus cereus (strain ZK / E33L).